Consider the following 364-residue polypeptide: MREYKIAAIPADGIGPEVIAAGLQVLEALEKRSGDFSIHTETFDWGSDYYKKNGVMMPADGLEQLKKFDAIFFGAVGAPDVPDHITLWGLRLPICQGFDQYANVRPTKVLPGITPPLRNCGPGDLDWVIVRENSEGEYSGHGGRAHKGLPEEVGTEVAIFTRVGVTRIMRYAFKLAQARPRKLLTVVTKSNAQRHGMVMWDEIAAEVSKEFPDVTWDKMLVDAMTVRMTLKPQSLDTIVATNLHADILSDLAGALAGSLGVAPTANIDPERRFPSMFEPIHGSAFDITGKGIANPVATFWTAAQMLEHLGEKDAATRLMSAVERVTEAGILTPDVGGTADTQQVTDAVCEAIAGSNILNMAAVG.

Residues aspartate 222, aspartate 246, and aspartate 250 each contribute to the Mn(2+) site.

Belongs to the isocitrate and isopropylmalate dehydrogenases family. Requires Mg(2+) as cofactor. It depends on Mn(2+) as a cofactor. K(+) is required as a cofactor.

The protein localises to the cytoplasm. The enzyme catalyses tartrate + NAD(+) = 2-hydroxy-3-oxosuccinate + NADH + H(+). It carries out the reaction (2R,3S)-tartrate + NAD(+) = 2-hydroxy-3-oxosuccinate + NADH + H(+). It catalyses the reaction (2R,3R)-tartrate + NAD(+) = 2-hydroxy-3-oxosuccinate + NADH + H(+). The catalysed reaction is (2R,3R)-tartrate + H(+) = (R)-glycerate + CO2. The enzyme catalyses (R)-malate + NAD(+) = pyruvate + CO2 + NADH. The protein operates within carbohydrate acid metabolism; tartrate degradation; 2-hydroxy-3-oxosuccinate from L-tartrate: step 1/1. Its pathway is carbohydrate acid metabolism; tartrate degradation; 2-hydroxy-3-oxosuccinate from meso-tartrate: step 1/1. It participates in carbohydrate acid metabolism; tartrate degradation; D-glycerate from L-tartrate: step 1/1. Functionally, has multiple catalytic activities. Apart from catalyzing the oxidation of (+)-tartrate to oxaloglycolate, also converts meso-tartrate to D-glycerate and catalyzes the oxidative decarboxylation of D-malate to pyruvate. The sequence is that of Probable tartrate dehydrogenase/decarboxylase TtuC (ttuC) from Agrobacterium vitis (Rhizobium vitis).